Reading from the N-terminus, the 121-residue chain is Fluoride-specific ion channel FluC 3 (121 aa).

4 consecutive transmembrane segments (helical) span residues 3–23 (VFLPILVCLCGGVGASCRYLL), 40–60 (FTINLIAGFLAGLVAALALGG), 69–89 (VLATGFLGGFSTFSTAINEMV), and 101–121 (AAYLVLSLGVPVVAAACGFLV). Residues G76 and S79 each contribute to the Na(+) site.

It belongs to the fluoride channel Fluc/FEX (TC 1.A.43) family.

The protein resides in the cell membrane. The enzyme catalyses fluoride(in) = fluoride(out). Na(+) is not transported, but it plays an essential structural role and its presence is essential for fluoride channel function. Fluoride-specific ion channel. Important for reducing fluoride concentration in the cell, thus reducing its toxicity. This is Fluoride-specific ion channel FluC 3 from Bifidobacterium longum (strain NCC 2705).